The sequence spans 896 residues: Zinc finger protein 574 (896 aa).

3 consecutive C2H2-type zinc fingers follow at residues 16–38 (YVCS…QNSH), 76–98 (YQCL…QELH), and 126–148 (YECV…RQTH). At S164 the chain carries Phosphoserine. The C2H2-type 4 zinc-finger motif lies at 214–236 (YKCSECSQLFQLPADFLEHQATH). Low complexity predominate over residues 259-272 (VEVPVSQPEPVPSS). The segment at 259 to 303 (VEVPVSQPEPVPSSDHSYELRNGEALGRDRRGRRARRNNSGEPGG) is disordered. A compositionally biased stretch (basic and acidic residues) spans 274-287 (HSYELRNGEALGRD). Residue S298 is modified to Phosphoserine. C2H2-type zinc fingers lie at residues 309 to 331 (LFCS…LRSH), 336 to 358 (FKCP…LGDH), 364 to 386 (FLCV…RRAH), and 392 to 413 (HSCP…RRTH). The interval 434-460 (FPEPAPAETGEPEAPEPPVAEESSAEP) is disordered. 6 C2H2-type zinc fingers span residues 466 to 489 (YRCL…RFVH), 495 to 517 (HKCS…LRTH), 523 to 545 (FPCP…RLTH), 551 to 573 (YRCG…RLVH), 579 to 601 (YRCQ…RYHH), and 607 to 630 (YKCR…LVAH). The C2H2-type 15; degenerate zinc finger occupies 636–659 (HRCSSCGAAFPSSLRLREHRCAAA). A C2H2-type 16 zinc finger spans residues 667 to 689 (FECGTCGKKVGSAARLQAHEAAH). Residues 687–733 (AAHAAAGPGEVLAKEPPAPRAPRAARTPITSPTTLGSAAPAAPAAPA) are disordered. Residues 707-732 (APRAARTPITSPTTLGSAAPAAPAAP) are compositionally biased toward low complexity. S717 carries the post-translational modification Phosphoserine. 4 consecutive C2H2-type zinc fingers follow at residues 738-760 (LECS…RRIH), 766-788 (YPCP…RRLH), 794-816 (FACE…RRIH), and 822-844 (YSCP…RKTH). R832 bears the Asymmetric dimethylarginine mark.

This sequence belongs to the krueppel C2H2-type zinc-finger protein family.

It localises to the nucleus. In terms of biological role, may be involved in transcriptional regulation. This chain is Zinc finger protein 574 (ZNF574), found in Bos taurus (Bovine).